A 1199-amino-acid polypeptide reads, in one-letter code: Tubulin monoglutamylase TTLL4 (1199 aa).

Residues 1 to 25 (MASAGTQHYSIGLRQKNSFKQSGPS) show a composition bias toward polar residues. 3 disordered regions span residues 1 to 43 (MASA…RVWP), 472 to 517 (IQLG…ELVD), and 525 to 544 (RDENEEEEGDSECSSLSAVS). Residues 477 to 495 (SEKERPEEARELDSSDRDI) are compositionally biased toward basic and acidic residues. The span at 506 to 517 (AETEDTEEELVD) shows a compositional bias: acidic residues. The 344-residue stretch at 604–947 (RKLLRWKMST…VLPNAEDIIS (344 aa)) folds into the TTL domain. Position 691 is a phosphoserine (Ser691). Residues Lys721, 727-728 (RG), 749-752 (QRYL), and 762-764 (KFD) contribute to the ATP site. An a protein-binding site is contributed by Arg727. An L-glutamate-binding site is contributed by Arg788. Position 809–810 (809–810 (TN)) interacts with ATP. 3 residues coordinate L-glutamate: Tyr811, Ser812, and Lys833. Asp893, Glu906, and Asn908 together coordinate Mg(2+). The interval 918–1029 (PLDISIKGQM…RGQFERIFPS (112 aa)) is c-MTBD region. Lys924 contributes to the L-glutamate binding site. The segment covering 1130–1141 (GTTPKSKKTQAG) has biased composition (polar residues). Residues 1130-1199 (GTTPKSKKTQ…ISDSLLAVSP (70 aa)) are disordered. Over residues 1151–1160 (SSKDSEDTSK) the composition is skewed to basic and acidic residues. The segment covering 1164 to 1192 (LSTQTLPVIKCSGQTSRLSASSTFQSISD) has biased composition (polar residues).

Belongs to the tubulin--tyrosine ligase family. The cofactor is Mg(2+).

Its subcellular location is the cytoplasm. It is found in the cell projection. The protein resides in the cilium. The protein localises to the cytoskeleton. It localises to the cilium basal body. The enzyme catalyses L-glutamyl-[protein] + L-glutamate + ATP = gamma-L-glutamyl-L-glutamyl-[protein] + ADP + phosphate + H(+). Its function is as follows. Monoglutamylase which modifies both tubulin and non-tubulin proteins, adding a single glutamate on the gamma-carboxyl group of specific glutamate residues of target proteins. Involved in the side-chain initiation step of the polyglutamylation reaction but not in the elongation step. Preferentially modifies beta-tail tubulin over the alpha-tubulin. Monoglutamylates nucleosome assembly proteins NAP1L1 and NAP1L4. Monoglutamylates nucleotidyltransferase CGAS, leading to inhibition of CGAS catalytic activity, thereby preventing antiviral defense function. Involved in KLF4 glutamylation which impedes its ubiquitination, thereby leading to somatic cell reprogramming, pluripotency maintenance and embryogenesis. This chain is Tubulin monoglutamylase TTLL4, found in Homo sapiens (Human).